A 100-amino-acid polypeptide reads, in one-letter code: Small ribosomal subunit protein bS20 (100 aa).

Belongs to the bacterial ribosomal protein bS20 family.

In terms of biological role, binds directly to 16S ribosomal RNA. This is Small ribosomal subunit protein bS20 from Synechococcus sp. (strain JA-3-3Ab) (Cyanobacteria bacterium Yellowstone A-Prime).